Here is a 507-residue protein sequence, read N- to C-terminus: Putative propionyl-CoA carboxylase beta chain (507 aa).

A compositionally biased stretch (basic and acidic residues) spans Met1 to Ala25. Positions Met1–Lys30 are disordered. In terms of domain architecture, CoA carboxyltransferase N-terminal spans Met1–Glu254. The segment at Met1–Lys501 is carboxyltransferase. Residues Glu256 to Lys501 enclose the CoA carboxyltransferase C-terminal domain.

Belongs to the AccD/PCCB family. In terms of assembly, probably a dodecamer composed of six biotin-containing alpha subunits and six beta subunits.

It carries out the reaction propanoyl-CoA + hydrogencarbonate + ATP = (S)-methylmalonyl-CoA + ADP + phosphate + H(+). The protein operates within metabolic intermediate metabolism; propanoyl-CoA degradation; succinyl-CoA from propanoyl-CoA: step 1/3. The protein is Putative propionyl-CoA carboxylase beta chain (yqjD) of Bacillus subtilis (strain 168).